A 148-amino-acid chain; its full sequence is uncharacterized protein (148 aa).

The helical transmembrane segment at tyrosine 22–valine 40 threads the bilayer. The interval histidine 43–histidine 141 is histidine-rich.

The protein localises to the host membrane. This is an uncharacterized protein from African swine fever virus (strain Badajoz 1971 Vero-adapted) (Ba71V).